A 178-amino-acid chain; its full sequence is MGRTRENKEDVVADLKELLKESQLAVIIDYQGLSVAEITDLRRRIRPVGGTCKIAKNTLVRIAVDGDQNWQPMQEYLKGSSAVLLVQEDVGGIVKAYKSFQKDSKKTELRGGVMEGRSLTKDQVEALADLPSKEQLYAQIAGAINSITAKIAIGIKEVPSSVARGLQAYSEKEQGSES.

It belongs to the universal ribosomal protein uL10 family. As to quaternary structure, part of the ribosomal stalk of the 50S ribosomal subunit. The N-terminus interacts with L11 and the large rRNA to form the base of the stalk. The C-terminus forms an elongated spine to which L12 dimers bind in a sequential fashion forming a multimeric L10(L12)X complex.

Forms part of the ribosomal stalk, playing a central role in the interaction of the ribosome with GTP-bound translation factors. This is Large ribosomal subunit protein uL10 from Gloeothece citriformis (strain PCC 7424) (Cyanothece sp. (strain PCC 7424)).